The primary structure comprises 191 residues: MTPAQTNGTTTVHPHGAKNGSGGSALPTLVVFGFIVTLLFFLFMLYFWNNDVFRKLLRCAWIQRCCDRFDAWQDEVIYRRPSRRSQSDDESRTNSVSSYVLLSPASDGGFDNPALTEAVDSVDDWATTSVFYATSDETADTERRDSQQLLIELPPEPLPPDVVAAMQKAVKRAVQNALRHSHDSWQLHQTL.

The chain crosses the membrane as a helical span at residues 28-48 (TLVVFGFIVTLLFFLFMLYFW).

The protein resides in the host membrane. This chain is Protein UL140 (UL140), found in Homo sapiens (Human).